The chain runs to 452 residues: Cytoplasmic tRNA 2-thiolation protein 2 (452 aa).

This sequence belongs to the CTU2/NCS2 family.

It localises to the cytoplasm. Its pathway is tRNA modification; 5-methoxycarbonylmethyl-2-thiouridine-tRNA biosynthesis. Plays a central role in 2-thiolation of mcm(5)S(2)U at tRNA wobble positions of tRNA(Lys), tRNA(Glu) and tRNA(Gln). May act by forming a heterodimer with NCS6 that ligates sulfur from thiocarboxylated URM1 onto the uridine of tRNAs at wobble position. Prior mcm(5) tRNA modification by the elongator complex is required for 2-thiolation. May also be involved in protein urmylation. In Candida albicans (strain SC5314 / ATCC MYA-2876) (Yeast), this protein is Cytoplasmic tRNA 2-thiolation protein 2.